A 610-amino-acid polypeptide reads, in one-letter code: MVALLIFLGIFTCVETLPLSDSPSSYIPEEVPSSQTADIGLPPPTEFTLPNEDDEILIRKLNIQKTRKEILYGPSLIGKTSFFISGPLGDQISQRDQTLWSRDAAPVVQAVSHDAAAALHDIQIHGGLQNLDDYKILYQGHWSSSVPGGIAKGQFSNFTSDLLFSMERLSTNPYILRRLHPHADELPFAVDSKIVQKLTGSTLPSLHKAGRLFLADHSYQKDYVAQEGRYAAACQALFYLDDRCHQFLPLAIKTNVGSNLTYTPLDEPNDWLLAKVMFNVNDLFHGQMYHLASTHAVAEIVHLAALRTMSSRHPVLALLQRLMYQAYAIRPIGNNILFNPGGLIDQNSVFSNVAVRKFATDFYPTVAGPVRSNYFEANLRSRGLLNATHGPDLPHFPFYEDGARIIKVIRTFIQSFVKSIYKSDKVLAKDWELQAWIAEANGAAEVIDFPPTPLKKRKHLVDILTHMAWLTGVSHHVLNQGEPVTTSGVLPLHPGSLYAPVPGEKGVVDSLLPWLPNEQKSVDQISFLALFNRPQIVENNRTLRYMFNSESLLAGTVRAVAAANERFMEEMGHISQEISNRKFDDDGLSQGMPFIWTGMDPGVIPFYLSV.

Residues 1–16 form the signal peptide; that stretch reads MVALLIFLGIFTCVET. Residues 47–610 enclose the Lipoxygenase domain; sequence FTLPNEDDEI…PGVIPFYLSV (564 aa). Asparagine 157 and asparagine 259 each carry an N-linked (GlcNAc...) asparagine glycan. Positions 290 and 295 each coordinate Mn(2+). N-linked (GlcNAc...) asparagine glycosylation is present at asparagine 386. 2 residues coordinate Mn(2+): histidine 475 and asparagine 479. N-linked (GlcNAc...) asparagine glycosylation is present at asparagine 540. Valine 610 is a binding site for Mn(2+).

The protein belongs to the lipoxygenase family. Manganese lipoxygenase subfamily. Mn(2+) is required as a cofactor. N- and O-glycosylated.

It localises to the secreted. The enzyme catalyses (9Z,12Z)-octadecadienoate + O2 = (11S)-hydroperoxy-(9Z,12Z)-octadecadienoate. It carries out the reaction (9Z,12Z)-octadecadienoate + O2 = (11R)-hydroperoxy-(9Z,12Z)-octadecadienoate. It catalyses the reaction (9Z,12Z)-octadecadienoate + O2 = (13S)-hydroperoxy-(9Z,11E)-octadecadienoate. The catalysed reaction is (9Z,12Z,15Z)-octadecatrienoate + O2 = (11S)-hydroperoxy-(9Z,12Z,15Z)-octadecatrienoate. Lipoxygenase that metabolizes linoleic and alpha-linolenic acids to 9-, 11- and 13-hydroperoxy fatty acids. Oxidizes linoleic acid to mainly 11R-, 13S- and racemic 9-HPODE, and alpha-linolenic acid to 11-HPOTrE. The protein is Manganese lipoxygenase of Fusarium oxysporum (strain Fo5176) (Fusarium vascular wilt).